We begin with the raw amino-acid sequence, 224 residues long: Response regulator protein GraR (224 aa).

A Response regulatory domain is found at 2-115 (QILLVEDDNT…VLIAKLQAIY (114 aa)). Asp51 bears the 4-aspartylphosphate mark. Positions 126–224 (KRTLTWQDAV…KVGKGYMAHE (99 aa)) form a DNA-binding region, ompR/PhoB-type. Phosphothreonine is present on residues Thr128, Thr130, and Thr149.

As to quaternary structure, interacts with GraX. In terms of processing, phosphorylated by GraS. Phosphorylated by Stk1; phosphorylation increases the DNA-binding activity of GraR.

The protein localises to the cytoplasm. Member of the two-component regulatory system GraR/GraS involved in resistance against cationic antimicrobial peptides (CAMPs). Upon phosphorylation by GraS, functions as a transcription regulator by direct binding to promoter regions of target genes such as adhesins, exoproteins, transporters, toxins, and proteins involved in cell wall synthesis. Down-regulates the expression of many genes involved in RNA and amino acid synthesis or glycolysis. The protein is Response regulator protein GraR (graR) of Staphylococcus aureus (strain Mu3 / ATCC 700698).